The sequence spans 142 residues: Cell division protein SepF (142 aa).

Belongs to the SepF family. Homodimer. Interacts with FtsZ.

The protein localises to the cytoplasm. In terms of biological role, cell division protein that is part of the divisome complex and is recruited early to the Z-ring. Probably stimulates Z-ring formation, perhaps through the cross-linking of FtsZ protofilaments. Its function overlaps with FtsA. The polypeptide is Cell division protein SepF (Syntrophomonas wolfei subsp. wolfei (strain DSM 2245B / Goettingen)).